Reading from the N-terminus, the 89-residue chain is Small ribosomal subunit protein uS14A (89 aa).

The protein belongs to the universal ribosomal protein uS14 family. In terms of assembly, part of the 30S ribosomal subunit. Contacts proteins S3 and S10.

Binds 16S rRNA, required for the assembly of 30S particles and may also be responsible for determining the conformation of the 16S rRNA at the A site. In Lacticaseibacillus paracasei (strain ATCC 334 / BCRC 17002 / CCUG 31169 / CIP 107868 / KCTC 3260 / NRRL B-441) (Lactobacillus paracasei), this protein is Small ribosomal subunit protein uS14A.